The following is a 178-amino-acid chain: Chorion class high-cysteine HCB protein 13 (178 aa).

Positions 1 to 21 are cleaved as a signal peptide; it reads MAAKLILFVCAIALVAQSVLG. Residues 22-46 are left arm; the sequence is TGCGCCCRGCGCGCGGCGSRCCDRF. A central domain region spans residues 47 to 110; sequence CLCSNSAAPT…GDGCVGITQS (64 aa). The right arm (Gly-rich tandem repeats) stretch occupies residues 111-178; the sequence is CGGCGCGCGG…GCGCGGCGCC (68 aa).

This sequence belongs to the chorion protein family.

Its function is as follows. This protein is one of many from the eggshell of the silk moth. The protein is Chorion class high-cysteine HCB protein 13 of Bombyx mori (Silk moth).